The primary structure comprises 312 residues: uncharacterized protein (312 aa).

Helical transmembrane passes span 9 to 29, 115 to 135, 187 to 207, 224 to 244, 264 to 284, and 292 to 312; these read LTLT…GLFI, LATL…IGFI, ITIA…DYIT, ITVA…AGEF, ILSS…IYGF, and MIST…TLIL.

Its subcellular location is the cell membrane. This is an uncharacterized protein from Methanocaldococcus jannaschii (strain ATCC 43067 / DSM 2661 / JAL-1 / JCM 10045 / NBRC 100440) (Methanococcus jannaschii).